The chain runs to 574 residues: Fusion glycoprotein F0 (574 aa).

Positions M1–C25 are cleaved as a signal peptide. The Extracellular segment spans residues Q26–N524. N-linked (GlcNAc...) asparagine; by host glycosylation is found at N27 and N70. Intrachain disulfides connect C37-C439, C69-C212, C313-C343, C322-C333, C358-C367, C382-C393, and C416-C422. A coiled-coil region spans residues V76–L96. Residue N120 is glycosylated (N-linked (GlcNAc...) asparagine; by host). The fusion peptide stretch occupies residues F137 to V157. The stretch at L158–N209 forms a coiled coil. The stretch at L481–V516 forms a coiled coil. N500 carries N-linked (GlcNAc...) asparagine; by host glycosylation. A helical transmembrane segment spans residues V525–S550. Residues K551 to K574 are Cytoplasmic-facing.

Belongs to the paramyxoviruses fusion glycoprotein family. Homotrimer. Heterodimer with fusion protein F2; disulfide-linked. Part of a complex composed of F1, F2 and G glycoproteins. As a heterodimer with F2, interacts with host RHOA; this interaction facilitates virus-induced syncytium formation. As to quaternary structure, homotrimer. Heterodimer with fusion protein F1; disulfide-linked. Part of a complex composed of F1, F2 and G glycoproteins. As a heterodimer with F1, interacts with host RHOA; this interaction facilitates virus-induced syncytium formation. In terms of processing, the F glycoprotein is synthesized as a F0 inactive precursor that is heavily N-glycosylated and processed at two sites by a host furin-like protease probably in the Golgi. The cleavage site between p27 and F1 may occur after endocytosis to yield the mature F1 and F2 proteins. Both cleavages are required for membrane fusion and p27 is released from the processed protein.

Its subcellular location is the host Golgi apparatus membrane. The protein resides in the virion membrane. It is found in the host cell membrane. Functionally, inactive precursor that is cleaved at two sites by a furin-like protease to give rise to the mature F1 and F2 fusion glycoproteins. Class I viral fusion protein. Under the current model, the protein has at least 3 conformational states: pre-fusion native state, pre-hairpin intermediate state, and post-fusion hairpin state. During viral and plasma cell membrane fusion, the coiled coil regions assume a trimer-of-hairpins structure, positioning the fusion peptide in close proximity to the C-terminal region of the ectodomain. The formation of this structure appears to drive apposition and subsequent fusion of viral and cellular membranes leading to delivery of the nucleocapsid into the cytoplasm. This fusion is pH independent and occurs at the plasma or endosomal membrane. The trimer of F1-F2 (F protein) also facilitates the attachment and entry into the host cell. Later in infection, F protein expressed at the plasma membrane of infected cells can mediate fusion with adjacent cells to form syncytia, a cytopathic effect that could lead to tissue necrosis. In terms of biological role, major determinant of the species specificity of RSV infection. The trimer of F1-F2 (F protein) also facilitates the attachment and entry into the host cell. Later in infection, F protein expressed at the plasma membrane of infected cells can mediate fusion with adjacent cells to form syncytia, a cytopathic effect that could lead to tissue necrosis. The chain is Fusion glycoprotein F0 (F) from Bos taurus (Bovine).